We begin with the raw amino-acid sequence, 412 residues long: Tryptophan 2,3-dioxygenase (412 aa).

Substrate contacts are provided by residues 79–83 (FIVVH), Tyr-146, and Arg-150. Heme is bound at residue His-346. Thr-360 contributes to the substrate binding site.

It belongs to the tryptophan 2,3-dioxygenase family. Homotetramer. Heme is required as a cofactor.

The enzyme catalyses L-tryptophan + O2 = N-formyl-L-kynurenine. The protein operates within amino-acid degradation; L-tryptophan degradation via kynurenine pathway; L-kynurenine from L-tryptophan: step 1/2. Heme-dependent dioxygenase that catalyzes the oxidative cleavage of the L-tryptophan (L-Trp) pyrrole ring and converts L-tryptophan to N-formyl-L-kynurenine. Catalyzes the oxidative cleavage of the indole moiety. This is Tryptophan 2,3-dioxygenase from Sorangium cellulosum (strain So ce56) (Polyangium cellulosum (strain So ce56)).